The following is a 741-amino-acid chain: Protein O-mannosyl-transferase TMTC4 (741 aa).

Topologically, residues 1 to 10 (MVELDADLDH) are cytoplasmic. Residues 11–31 (IVPSVLPPFWAKLVVGFVSLL) form a helical membrane-spanning segment. Topologically, residues 32–110 (CFARSYDGDF…FHPVGFHVVN (79 aa)) are extracellular. An N-linked (GlcNAc...) asparagine glycan is attached at Asn-77. The helical transmembrane segment at 111–131 (ILLHGSISILMLDVFSVLFGG) threads the bilayer. The Cytoplasmic portion of the chain corresponds to 132-146 (LQYTGKGQRVHLAPR). A run of 2 helical transmembrane segments spans residues 147–166 (ASLLATLLFAVHPVHTECVA) and 167–185 (GVVGRADLLCALFFLLSFL). Residues 186 to 198 (GYCQAFKETGNKE) lie on the Cytoplasmic side of the membrane. A helical transmembrane segment spans residues 199–219 (GTHSSTFWVLLSIFLGAVAML). At 220–224 (CKEQG) the chain is on the extracellular side. A helical transmembrane segment spans residues 225–245 (ITVLGLNAVFDILVIGKLDIL). The Cytoplasmic portion of the chain corresponds to 246–265 (AAVRKVLHKDKSQENAGMFK). Residues 266-286 (NGGLLFRIALLTIGGTSMLYI) form a helical membrane-spanning segment. Topologically, residues 287 to 354 (RWKIMGTGPP…PLIKSVGDWR (68 aa)) are extracellular. A helical transmembrane segment spans residues 355–375 (VIALAALWLCLIGLIFQALCS). The Cytoplasmic segment spans residues 376-382 (EDSCKRR). A helical membrane pass occupies residues 383–403 (ILTLGLGFLVIPFLPASNLFF). The Extracellular segment spans residues 404–412 (RVGFVVAER). The helical transmembrane segment at 413–433 (VLYLPSAGYCVLLTFGFGALS) threads the bilayer. Residues 434-441 (RHTKKKKP) are Cytoplasmic-facing. Residues 442–462 (VAAIILGILLINALRCVIRSG) traverse the membrane as a helical segment. At 463–741 (EWRSEEQLFR…KLEQTQKKDV (279 aa)) the chain is on the extracellular side. TPR repeat units lie at residues 482 to 515 (AKVHYNIGKNLADQGNQTAAIKYYREAVRLNPKY), 516 to 549 (VHAMNNLGNILKERNELQEAEELLSLAVQIQPDF), 550 to 583 (AAAWMNLGIVQNSLKRFEEAEQSYRTAIKHRRKY), 584 to 617 (PDCYYNLGRLYADLNRHVDALNAWRNATVLKPEH), 618 to 651 (SLAWNNMIILLDNTGNLAQAEAVGREALQLIPND), 652 to 685 (HSLMFSLANVLGKSQKYKESEALFLKAIKANPNV), and 686 to 719 (ASYHGNLAVLYHRWGHLDSAKKHYEISLQLDPVA). A glycan (N-linked (GlcNAc...) asparagine) is linked at Asn-497. Residue Asn-609 is glycosylated (N-linked (GlcNAc...) asparagine). A glycan (N-linked (GlcNAc...) asparagine) is linked at Asn-725.

The protein belongs to the TMTC family.

It is found in the membrane. Its subcellular location is the endoplasmic reticulum. The enzyme catalyses a di-trans,poly-cis-dolichyl beta-D-mannosyl phosphate + L-seryl-[protein] = 3-O-(alpha-D-mannosyl)-L-seryl-[protein] + a di-trans,poly-cis-dolichyl phosphate + H(+). The catalysed reaction is a di-trans,poly-cis-dolichyl beta-D-mannosyl phosphate + L-threonyl-[protein] = 3-O-(alpha-D-mannosyl)-L-threonyl-[protein] + a di-trans,poly-cis-dolichyl phosphate + H(+). It participates in protein modification; protein glycosylation. In terms of biological role, transfers mannosyl residues to the hydroxyl group of serine or threonine residues. The 4 members of the TMTC family are O-mannosyl-transferases dedicated primarily to the cadherin superfamily, each member seems to have a distinct role in decorating the cadherin domains with O-linked mannose glycans at specific regions. Also acts as O-mannosyl-transferase on other proteins such as PDIA3. This is Protein O-mannosyl-transferase TMTC4 from Mus musculus (Mouse).